We begin with the raw amino-acid sequence, 248 residues long: Type III pantothenate kinase (248 aa).

8 to 15 (DAGNTRTK) serves as a coordination point for ATP. Substrate contacts are provided by residues Tyr-87 and 94 to 97 (GVDR). Catalysis depends on Asp-96, which acts as the Proton acceptor. Thr-119 is a binding site for ATP. Residue Thr-173 participates in substrate binding.

This sequence belongs to the type III pantothenate kinase family. Homodimer. NH4(+) serves as cofactor. The cofactor is K(+).

It localises to the cytoplasm. It carries out the reaction (R)-pantothenate + ATP = (R)-4'-phosphopantothenate + ADP + H(+). Its pathway is cofactor biosynthesis; coenzyme A biosynthesis; CoA from (R)-pantothenate: step 1/5. Functionally, catalyzes the phosphorylation of pantothenate (Pan), the first step in CoA biosynthesis. This chain is Type III pantothenate kinase, found in Methylobacillus flagellatus (strain ATCC 51484 / DSM 6875 / VKM B-1610 / KT).